A 367-amino-acid polypeptide reads, in one-letter code: Putrescine-binding periplasmic protein SpuD (367 aa).

The first 24 residues, 1 to 24 (MMKRFGKTLLALTLAGSVAGMAQA), serve as a signal peptide directing secretion. Residue 36–37 (SD) participates in putrescine binding. A disulfide bond links Cys173 and Cys236. Putrescine contacts are provided by Asp244 and Asp275.

Belongs to the bacterial solute-binding protein PotD/PotF family.

The protein localises to the periplasm. The protein resides in the secreted. Functionally, putrescine-binding protein probably required for putrescine uptake into cells. Binds putrescine with high affinity, spermidine with relatively low affinity. Does not bind cadaverine or spermine. Putrescine binding induces large inter-domain conformational changes. In Pseudomonas aeruginosa (strain UCBPP-PA14), this protein is Putrescine-binding periplasmic protein SpuD (spuD).